Here is a 290-residue protein sequence, read N- to C-terminus: Large ribosomal subunit protein uL2m (290 aa).

Belongs to the universal ribosomal protein uL2 family. In terms of assembly, probably part of the large ribosomal subunit.

It localises to the hydrogenosome. This Nyctotherus ovalis protein is Large ribosomal subunit protein uL2m (rpl2).